The following is a 544-amino-acid chain: Putative cysteine ligase BshC (544 aa).

Residues 431–463 (LNDTCRTIKEEHEKFIQELSRLDEKIYDFEEKN) are a coiled coil.

Belongs to the BshC family.

In terms of biological role, involved in bacillithiol (BSH) biosynthesis. May catalyze the last step of the pathway, the addition of cysteine to glucosamine malate (GlcN-Mal) to generate BSH. This chain is Putative cysteine ligase BshC, found in Natranaerobius thermophilus (strain ATCC BAA-1301 / DSM 18059 / JW/NM-WN-LF).